The primary structure comprises 216 residues: MNNLNYFTKISASCAALALMTLAGCASHKPIDYAPTQVESANQAEAWELQGKLAVRTPEDKFSTNLYWFHTQTNDDLTLTTMLGTTVMTLNKTPSQASLQIEDKVYQDSDAEELLRRLTGWSIPVDTLPLWITGQVSAQDEVVAVDEQGRPKEVLNHTGSSPWHVSFNSWQEQSGAELPRLLQLERDDIRLKLQVSQWQALTPKRASQPESTDDKQ.

The N-terminal stretch at 1–24 (MNNLNYFTKISASCAALALMTLAG) is a signal peptide. Residue cysteine 25 is the site of N-palmitoyl cysteine attachment. The S-diacylglycerol cysteine moiety is linked to residue cysteine 25.

It belongs to the LolB family. As to quaternary structure, monomer.

It is found in the cell outer membrane. Functionally, plays a critical role in the incorporation of lipoproteins in the outer membrane after they are released by the LolA protein. In Shewanella loihica (strain ATCC BAA-1088 / PV-4), this protein is Outer-membrane lipoprotein LolB.